Here is a 342-residue protein sequence, read N- to C-terminus: MKIIVFGAGAWGTAMALSAAAHPAGHAVTLWARDGRQADAMQAARQNARYLPGIAFPAALALASGAPSGALASCRADLAIVATPMSGLRGMLEELRDATIPVAWLCKGFEAVPAGGETAAQGLMAHEICSQVAPRLRAGALSGPSFALEAAQGRPTALVAASRDAHVRELLVEAFHGPTLRVYANEDIVGVEVGGAVKNVLAIATGLCDGLDLGTNARAALITRGLAEMSRLGLALGARAETFMGLSGLGDLVLTATGDLSRNRRVGLALARGLTLDQAVESLGHVAEGVYSARTVVRRAGQLGVDMPIAREVVALLDGRSTASDAVARLMGRSPAAELRSC.

NADPH contacts are provided by Trp11, Arg33, and Lys107. Sn-glycerol 3-phosphate-binding residues include Lys107, Gly143, and Ser145. Residue Ala147 participates in NADPH binding. Lys198, Asp251, Ser261, Arg262, and Asn263 together coordinate sn-glycerol 3-phosphate. Lys198 (proton acceptor) is an active-site residue. Arg262 contributes to the NADPH binding site. The NADPH site is built by Val286 and Glu288.

The protein belongs to the NAD-dependent glycerol-3-phosphate dehydrogenase family.

Its subcellular location is the cytoplasm. It catalyses the reaction sn-glycerol 3-phosphate + NAD(+) = dihydroxyacetone phosphate + NADH + H(+). The catalysed reaction is sn-glycerol 3-phosphate + NADP(+) = dihydroxyacetone phosphate + NADPH + H(+). It participates in membrane lipid metabolism; glycerophospholipid metabolism. Its function is as follows. Catalyzes the reduction of the glycolytic intermediate dihydroxyacetone phosphate (DHAP) to sn-glycerol 3-phosphate (G3P), the key precursor for phospholipid synthesis. The polypeptide is Glycerol-3-phosphate dehydrogenase [NAD(P)+] (Paracidovorax citrulli (strain AAC00-1) (Acidovorax citrulli)).